We begin with the raw amino-acid sequence, 162 residues long: NADH-quinone oxidoreductase subunit I (162 aa).

2 4Fe-4S ferredoxin-type domains span residues 52–82 and 93–122; these read LRRY…IEAG and VRYD…EGPN. The [4Fe-4S] cluster site is built by Cys-62, Cys-65, Cys-68, Cys-72, Cys-102, Cys-105, Cys-108, and Cys-112.

Belongs to the complex I 23 kDa subunit family. NDH-1 is composed of 14 different subunits. Subunits NuoA, H, J, K, L, M, N constitute the membrane sector of the complex. Requires [4Fe-4S] cluster as cofactor.

It localises to the cell inner membrane. The enzyme catalyses a quinone + NADH + 5 H(+)(in) = a quinol + NAD(+) + 4 H(+)(out). Its function is as follows. NDH-1 shuttles electrons from NADH, via FMN and iron-sulfur (Fe-S) centers, to quinones in the respiratory chain. The immediate electron acceptor for the enzyme in this species is believed to be ubiquinone. Couples the redox reaction to proton translocation (for every two electrons transferred, four hydrogen ions are translocated across the cytoplasmic membrane), and thus conserves the redox energy in a proton gradient. The sequence is that of NADH-quinone oxidoreductase subunit I from Nitrobacter winogradskyi (strain ATCC 25391 / DSM 10237 / CIP 104748 / NCIMB 11846 / Nb-255).